Consider the following 119-residue polypeptide: UPF0738 protein BAA_1286 (119 aa).

This sequence belongs to the UPF0738 family.

The polypeptide is UPF0738 protein BAA_1286 (Bacillus anthracis (strain A0248)).